The chain runs to 269 residues: Intercellular adhesion molecule 4 (269 aa).

An N-terminal signal peptide occupies residues 1–20 (SLFPLSLLFFLAAAYPGVGS). Over 21–238 (ALGRRTKRAQ…MLAWSSAPTA (218 aa)) the chain is Extracellular. Ig-like C2-type domains follow at residues 60–122 (GKSV…TRWA) and 144–215 (GRKY…LNLD). N-linked (GlcNAc...) asparagine glycans are attached at residues asparagine 66, asparagine 76, asparagine 188, and asparagine 221. 4 cysteine pairs are disulfide-bonded: cysteine 67–cysteine 111, cysteine 67–cysteine 115, cysteine 71–cysteine 115, and cysteine 151–cysteine 208. Residues 239–259 (LASVSIAALVGILLTVGAAYL) form a helical membrane-spanning segment. Residues 260-269 (CKCLAMKSQA) are Cytoplasmic-facing.

The protein belongs to the immunoglobulin superfamily. ICAM family. In terms of processing, N- and O-glycosylated.

It localises to the cell membrane. ICAM proteins are ligands for the leukocyte adhesion protein LFA-1 (integrin alpha-L/beta-2). ICAM4 is also a ligand for alpha-4/beta-1 and alpha-V integrins. This chain is Intercellular adhesion molecule 4 (ICAM4), found in Pan troglodytes (Chimpanzee).